Consider the following 288-residue polypeptide: HTH-type transcriptional regulator CzcR (288 aa).

Positions M1–T58 constitute an HTH lysR-type domain. The H-T-H motif DNA-binding region spans V18–K37.

This sequence belongs to the LysR transcriptional regulatory family.

This is HTH-type transcriptional regulator CzcR (czcR) from Bacillus anthracis.